A 47-amino-acid polypeptide reads, in one-letter code: Small, acid-soluble spore protein N (47 aa).

Residues M1–V12 are compositionally biased toward basic residues. Residues M1–E47 are disordered. Positions K29–E47 are enriched in polar residues.

The protein belongs to the SspN family.

The protein resides in the spore core. The protein is Small, acid-soluble spore protein N of Geobacillus kaustophilus (strain HTA426).